The chain runs to 188 residues: Segregation and condensation protein B (188 aa).

The protein belongs to the ScpB family. In terms of assembly, homodimer. Homodimerization may be required to stabilize the binding of ScpA to the Smc head domains. Component of a cohesin-like complex composed of ScpA, ScpB and the Smc homodimer, in which ScpA and ScpB bind to the head domain of Smc. The presence of the three proteins is required for the association of the complex with DNA.

The protein localises to the cytoplasm. In terms of biological role, participates in chromosomal partition during cell division. May act via the formation of a condensin-like complex containing Smc and ScpA that pull DNA away from mid-cell into both cell halves. This is Segregation and condensation protein B from Lactococcus lactis subsp. lactis (strain IL1403) (Streptococcus lactis).